The sequence spans 218 residues: Small ribosomal subunit protein uS3c (218 aa).

Residues 47–118 (VQKNMKTSSG…KLNIAITRIE (72 aa)) enclose the KH type-2 domain.

It belongs to the universal ribosomal protein uS3 family. As to quaternary structure, part of the 30S ribosomal subunit.

It is found in the plastid. It localises to the chloroplast. This is Small ribosomal subunit protein uS3c (rps3) from Lactuca sativa (Garden lettuce).